The chain runs to 500 residues: MIRLQTYAAFSLMATATAVYYAFSSREQFYPAMVYLSTSKICFVLLLNTGLVAMCVAWQLVKRLFLGTLREAEVERLNEQAWREVVEILFAVTIFRQDFSVSFLAMVAALLLVKALHWLAQKRVEYIETTPSVPMLSHARIVSFMLFLLVVDCLFLSNSLRSLIHKREASVAIFFSFEYMILATSTVSTFVKYIFYVSDMLMEGQWEKKAVYTFYLELISDLVHLSLYMLFFIAIFLNYGVPLHLIRELYETFRNFRIRIADYVRYRKITSNMNERFPDATADELNASDATCIICREEMTTAKKLLCGHLFHVHCLRSWLERQHTCPTCRAPILPPDNGRTAARPHGVHPGVQPVPGNGTPGSERAAGENISRRQAKLEAAASAASLYGRSFAYPPANNLNRYSTPPQSTSNGPQSGEASTSNQSPKGHATADPSAPTFYARGAVSSVTTTRELESSLQKAYENAIKSQIEMLQIQLQMFQHGATSSATNNENGEHTKSD.

Residues 1–3 (MIR) are Cytoplasmic-facing. The helical transmembrane segment at 4 to 24 (LQTYAAFSLMATATAVYYAFS) threads the bilayer. Over 25–40 (SREQFYPAMVYLSTSK) the chain is Lumenal. A helical transmembrane segment spans residues 41 to 61 (ICFVLLLNTGLVAMCVAWQLV). The Cytoplasmic segment spans residues 62 to 98 (KRLFLGTLREAEVERLNEQAWREVVEILFAVTIFRQD). A helical membrane pass occupies residues 99-119 (FSVSFLAMVAALLLVKALHWL). Residues 120–135 (AQKRVEYIETTPSVPM) lie on the Lumenal side of the membrane. The helical transmembrane segment at 136–156 (LSHARIVSFMLFLLVVDCLFL) threads the bilayer. The Cytoplasmic portion of the chain corresponds to 157–170 (SNSLRSLIHKREAS). The helical transmembrane segment at 171 to 191 (VAIFFSFEYMILATSTVSTFV) threads the bilayer. Topologically, residues 192 to 225 (KYIFYVSDMLMEGQWEKKAVYTFYLELISDLVHL) are lumenal. Residues 226–246 (SLYMLFFIAIFLNYGVPLHLI) traverse the membrane as a helical segment. At 247 to 500 (RELYETFRNF…NENGEHTKSD (254 aa)) the chain is on the cytoplasmic side. The RING-type; atypical zinc finger occupies 292–330 (CIICREEMTTAKKLLCGHLFHVHCLRSWLERQHTCPTCR). 2 disordered regions span residues 337-375 (DNGR…SRRQ) and 398-438 (NNLN…SAPT). Over residues 348-358 (VHPGVQPVPGN) the composition is skewed to low complexity. The segment covering 398 to 426 (NNLNRYSTPPQSTSNGPQSGEASTSNQSP) has biased composition (polar residues).

This sequence belongs to the HRD1 family.

The protein resides in the endoplasmic reticulum membrane. The catalysed reaction is S-ubiquitinyl-[E2 ubiquitin-conjugating enzyme]-L-cysteine + [acceptor protein]-L-lysine = [E2 ubiquitin-conjugating enzyme]-L-cysteine + N(6)-ubiquitinyl-[acceptor protein]-L-lysine.. It participates in protein modification; protein ubiquitination. Probable component of the HRD1 ubiquitin ligase complex that mediates the rapid degradation of misfolded endoplasmic reticulum (ER) proteins, a process called ER-associated degradation (ERAD). The sequence is that of ERAD-associated E3 ubiquitin-protein ligase HRD1 from Oryza sativa subsp. japonica (Rice).